A 555-amino-acid chain; its full sequence is Cinnamate beta-D-glucosyltransferase (555 aa).

His-19 (proton acceptor) is an active-site residue. An anthocyanidin is bound at residue His-19. Residues Gln-344, His-359, Trp-362, Asn-363, Ser-364, and Glu-367 each contribute to the UDP-alpha-D-glucose site. Residue Gly-382 participates in an anthocyanidin binding. Residues Asp-383 and Gln-384 each contribute to the UDP-alpha-D-glucose site.

The protein belongs to the UDP-glycosyltransferase family. As to expression, highest expression detected in fruit, with lower levels detected in flower and petiole. Barely detectable in leaf and root.

It catalyses the reaction (E)-cinnamate + UDP-alpha-D-glucose = 1-O-(trans-cinnamoyl)-beta-D-glucose + UDP. Broad spectrum multifunctional glucosyltransferase. Catalyzes the formation of cinnamic acid and p-coumaric acid glucose esters during fruit ripening. Accepted substrates range from derivatives of cinnamic acid and benzoic acid to heterocyclic and aliphatic compounds, resulting in the formation of O- and S-glucose esters and O-glucosides. May also be involved in detoxification of xenobiotics. This chain is Cinnamate beta-D-glucosyltransferase, found in Fragaria ananassa (Strawberry).